A 500-amino-acid polypeptide reads, in one-letter code: 7-alpha-hydroxycholest-4-en-3-one 12-alpha-hydroxylase (500 aa).

The helical transmembrane segment at 2–21 threads the bilayer; the sequence is VLWGLLGALLMVMVGWLCLP. The residue at position 325 (Ser325) is a Phosphoserine. Cys439 lines the heme pocket.

It belongs to the cytochrome P450 family. Requires heme as cofactor. In terms of tissue distribution, liver (at protein level).

Its subcellular location is the endoplasmic reticulum membrane. It localises to the microsome membrane. The catalysed reaction is 7alpha-hydroxycholest-4-en-3-one + reduced [NADPH--hemoprotein reductase] + O2 = 7alpha,12alpha-dihydroxycholest-4-en-3-one + oxidized [NADPH--hemoprotein reductase] + H2O + H(+). It catalyses the reaction 5beta-cholestane-3alpha,7alpha-diol + reduced [NADPH--hemoprotein reductase] + O2 = 5beta-cholestane-3alpha,7alpha,12alpha-triol + oxidized [NADPH--hemoprotein reductase] + H2O + H(+). The enzyme catalyses chenodeoxycholate + reduced [NADPH--hemoprotein reductase] + O2 = cholate + oxidized [NADPH--hemoprotein reductase] + H2O + H(+). It functions in the pathway lipid metabolism; bile acid biosynthesis. Up-regulated upon treatment with streptozotocin. In terms of biological role, a cytochrome P450 monooxygenase involved in primary bile acid biosynthesis. Catalyzes the 12alpha-hydroxylation of 7alpha-hydroxy-4-cholesten-3-one, an intermediate metabolite in cholic acid biosynthesis. Controls biliary balance of cholic acid and chenodeoxycholic acid, ultimately regulating the intestinal absorption of dietary lipids. Mechanistically, uses molecular oxygen inserting one oxygen atom into a substrate, and reducing the second into a water molecule, with two electrons provided by NADPH via cytochrome P450 reductase (CPR; NADPH--hemoprotein reductase). In Oryctolagus cuniculus (Rabbit), this protein is 7-alpha-hydroxycholest-4-en-3-one 12-alpha-hydroxylase (CYP8B1).